Here is a 401-residue protein sequence, read N- to C-terminus: Phosphoglycerate kinase 3, cytosolic (401 aa).

The (2R)-3-phosphoglycerate site is built by valine 24, aspartate 25, asparagine 27, arginine 41, serine 63, histidine 64, glycine 66, arginine 67, arginine 122, histidine 154, and arginine 155. ADP is bound at residue glycine 200. Residue glycine 200 participates in CDP binding. AMP-binding residues include lysine 202 and lysine 206. Lysine 206 contributes to the ATP binding site. Glycine 224 is an ADP binding site. Position 224 (glycine 224) interacts with CDP. 2 residues coordinate AMP: glycine 225 and glycine 297. Residues glycine 225, glycine 297, and asparagine 321 each contribute to the ATP site. CDP-binding residues include glycine 322 and phenylalanine 327. An ADP-binding site is contributed by phenylalanine 327. AMP is bound at residue glutamate 328. Residues glutamate 328, aspartate 359, and serine 360 each coordinate ATP. Residue aspartate 359 participates in Mg(2+) binding.

It belongs to the phosphoglycerate kinase family. As to quaternary structure, monomer. Requires Mg(2+) as cofactor. As to expression, expressed in roots, leaves and inflorescence.

It is found in the cytoplasm. The enzyme catalyses (2R)-3-phosphoglycerate + ATP = (2R)-3-phospho-glyceroyl phosphate + ADP. It participates in carbohydrate degradation; glycolysis; pyruvate from D-glyceraldehyde 3-phosphate: step 2/5. In Arabidopsis thaliana (Mouse-ear cress), this protein is Phosphoglycerate kinase 3, cytosolic.